The following is a 1523-amino-acid chain: uncharacterized protein (1523 aa).

A disordered region spans residues 1–89; that stretch reads MLPTSSNNEE…GSSNMNPYDR (89 aa). 993–1000 contacts ATP; the sequence is SPFGCGKS. Composition is skewed to polar residues over residues 1463–1476 and 1485–1498; these read TSRQ…NEYN and QSNN…SVTN. Positions 1463–1498 are disordered; the sequence is TSRQSKQQRANEYNSQHKHVKRQSNNDYGSQRSVTN.

This sequence belongs to the DNA2/NAM7 helicase family.

This is an uncharacterized protein from Caenorhabditis elegans.